The sequence spans 248 residues: NADP-dependent 3-hydroxy acid dehydrogenase YdfG (248 aa).

NADP(+)-binding positions include 7 to 12 (GATAGF), 32 to 33 (RR), 54 to 55 (DV), and Asn81. A substrate-binding site is contributed by Ser134. NADP(+) contacts are provided by residues Tyr147, Lys151, and 177-185 (PGLVGGTEF). The active-site Proton acceptor is the Tyr147.

Belongs to the short-chain dehydrogenases/reductases (SDR) family. In terms of assembly, homotetramer.

It carries out the reaction 3-hydroxypropanoate + NADP(+) = 3-oxopropanoate + NADPH + H(+). The enzyme catalyses L-allo-threonine + NADP(+) = aminoacetone + CO2 + NADPH. Functionally, NADP-dependent dehydrogenase with broad substrate specificity acting on 3-hydroxy acids. Catalyzes the NADP-dependent oxidation of L-allo-threonine to L-2-amino-3-keto-butyrate, which is spontaneously decarboxylated into aminoacetone. Also acts on D-threonine, L-serine, D-serine, D-3-hydroxyisobutyrate, L-3-hydroxyisobutyrate, D-glycerate and L-glycerate. Able to catalyze the reduction of the malonic semialdehyde to 3-hydroxypropionic acid. YdfG is apparently supplementing RutE, the presumed malonic semialdehyde reductase involved in pyrimidine degradation since both are able to detoxify malonic semialdehyde. In Escherichia coli O157:H7, this protein is NADP-dependent 3-hydroxy acid dehydrogenase YdfG.